The following is a 473-amino-acid chain: GTPase Der (473 aa).

EngA-type G domains are found at residues 3 to 167 (LTIA…GKDK) and 204 to 379 (IRIA…RIWN). Residues 9-16 (GRPNVGKS), 56-60 (DTAGL), 119-122 (NKSE), 210-217 (GRPNTGKS), 257-261 (DTAGL), and 322-325 (NKWD) each bind GTP. The KH-like domain maps to 380 to 464 (RRISTGKLNR…PIRLSLRTSD (85 aa)).

Belongs to the TRAFAC class TrmE-Era-EngA-EngB-Septin-like GTPase superfamily. EngA (Der) GTPase family. In terms of assembly, associates with the 50S ribosomal subunit.

Its function is as follows. GTPase that plays an essential role in the late steps of ribosome biogenesis. The sequence is that of GTPase Der from Bartonella bacilliformis (strain ATCC 35685 / KC583 / Herrer 020/F12,63).